Consider the following 885-residue polypeptide: Putative membrane protein YdgH (885 aa).

7 consecutive transmembrane segments (helical) span residues 9–29 (WAIAAIVLALTVVLSLFSPNL), 181–201 (IIGLLLIVFRSVVTPFIPIVV), 202–222 (VGFSYLISQSILGILVYNVDF), 227–247 (FTQTFLVAILFGIGTDYCILL), 278–298 (ISGFAVLIGFSALGFAKFAIF), 304–324 (VAVGVGILMIILYTLLPLFMV), and 354–374 (VARPFLFIVITVVITLPFILT). A disordered region spans residues 498 to 518 (MAGQTGSASNGGSGGSLGDAA). The next 5 membrane-spanning stretches (helical) occupy residues 716-736 (MVIMIIGLFIVLTILFRSMIM), 740-760 (MIASLLLTYYTSISITELIFV), 772-792 (VPFFSFVILIALGVDYSIFLL), 817-837 (VIITAAIILAGTFAAMMPSGV), and 847-867 (IIIGLLLYGLVILPLFIPAII).

It belongs to the resistance-nodulation-cell division (RND) (TC 2.A.6) family. MmpL subfamily.

The protein localises to the cell membrane. This chain is Putative membrane protein YdgH (ydgH), found in Bacillus subtilis (strain 168).